A 255-amino-acid polypeptide reads, in one-letter code: Small ribosomal subunit protein eS4 (255 aa).

The S4 RNA-binding domain maps to 44–107 (IPLLILVRDV…DEYYRMIPYP (64 aa)).

Belongs to the eukaryotic ribosomal protein eS4 family.

This Ignicoccus hospitalis (strain KIN4/I / DSM 18386 / JCM 14125) protein is Small ribosomal subunit protein eS4.